A 217-amino-acid polypeptide reads, in one-letter code: Translation initiation factor IF-3 (217 aa).

Belongs to the IF-3 family. In terms of assembly, monomer.

The protein resides in the cytoplasm. Its function is as follows. IF-3 binds to the 30S ribosomal subunit and shifts the equilibrium between 70S ribosomes and their 50S and 30S subunits in favor of the free subunits, thus enhancing the availability of 30S subunits on which protein synthesis initiation begins. The protein is Translation initiation factor IF-3 of Synechococcus sp. (strain CC9902).